A 167-amino-acid chain; its full sequence is T-cell surface glycoprotein CD3 delta chain (167 aa).

Positions M1–P21 are cleaved as a signal peptide. At R22–L100 the chain is on the extracellular side. C37 and C73 form a disulfide bridge. N-linked (GlcNAc...) asparagine glycosylation is found at N38 and N55. The chain crosses the membrane as a helical span at residues A101–F121. At A122–K167 the chain is on the cytoplasmic side. Residues D134–K162 enclose the ITAM domain. Y145 and Y156 each carry phosphotyrosine.

The TCR-CD3 complex is composed of a CD3D/CD3E and a CD3G/CD3E heterodimers that preferentially associate with TCRalpha and TCRbeta, respectively, to form TCRalpha/CD3E/CD3G and TCRbeta/CD3G/CD3E trimers. In turn, the hexamer interacts with CD3Z homodimer to form the TCR-CD3 complex. Alternatively, TCRalpha and TCRbeta can be replaced by TCRgamma and TCRdelta. Interacts with coreceptors CD4 and CD8. Post-translationally, phosphorylated on Tyr residues after T-cell receptor triggering by LCK in association with CD4/CD8. CD3D is mostly present on T-lymphocytes with its TCR-CD3 partners. Present also in fetal NK-cells.

It is found in the cell membrane. Part of the TCR-CD3 complex present on T-lymphocyte cell surface that plays an essential role in adaptive immune response. When antigen presenting cells (APCs) activate T-cell receptor (TCR), TCR-mediated signals are transmitted across the cell membrane by the CD3 chains CD3D, CD3E, CD3G and CD3Z. All CD3 chains contain immunoreceptor tyrosine-based activation motifs (ITAMs) in their cytoplasmic domain. Upon TCR engagement, these motifs become phosphorylated by Src family protein tyrosine kinases LCK and FYN, resulting in the activation of downstream signaling pathways. In addition of this role of signal transduction in T-cell activation, CD3D plays an essential role in thymocyte differentiation. Indeed, participates in correct intracellular TCR-CD3 complex assembly and surface expression. In absence of a functional TCR-CD3 complex, thymocytes are unable to differentiate properly. Interacts with CD4 and CD8 and thus serves to establish a functional link between the TCR and coreceptors CD4 and CD8, which is needed for activation and positive selection of CD4 or CD8 T-cells. In Ovis aries (Sheep), this protein is T-cell surface glycoprotein CD3 delta chain (CD3D).